Consider the following 204-residue polypeptide: GATA transcription factor 14 (204 aa).

Residues 57–66 (REFDTNDSKP) are compositionally biased toward basic and acidic residues. The tract at residues 57–102 (REFDTNDSKPSRNFSNLPTATRGRLHAPKRSGNKRGRQKRLSFKSP) is disordered. Positions 79–98 (GRLHAPKRSGNKRGRQKRLS) are enriched in basic residues. A GATA-type zinc finger spans residues 111-165 (GITDKSCSHCGTRKTPLWREGPRGAGTLCNACGMRYRTGRLLPEYRPASSPDFKP). The interval 180-204 (RERKSSPPNSFGFSESYHSTRKLGF) is disordered. Positions 185 to 196 (SPPNSFGFSESY) are enriched in polar residues.

Belongs to the type IV zinc-finger family. Class A subfamily.

The protein resides in the nucleus. In terms of biological role, transcriptional activator that specifically binds 5'-GATA-3' or 5'-GAT-3' motifs within gene promoters. May be involved in the regulation of some light-responsive genes. The polypeptide is GATA transcription factor 14 (GATA14) (Arabidopsis thaliana (Mouse-ear cress)).